The chain runs to 480 residues: MFVTAYFAVISLLALCVGLELTARRLTPPESSAAVNPAFRRFQATFLRAYLLALWADWLQGPYLYKLYRHYSFLESQIAILYVCGLASCVLFAPFSGWLSQALGRRHMCIFFCLSYATCCLTKLSRDYFVLIVGRILGGLSTSLLTTTFESWYVHHHVEIHDFPKEWIPTTFTKAATWNHGLAVGAGLVANLLAEWLHLGPVAPFLLAVPFLACCAWFVLTDWAKEEAEKSPEGIKQTLPLGTLNGGVTHLSARARFSRSCSDGLRCMLSDKRVMLLGGVQALFESVLYIFIFLWTPVLDPHGSPLGIVFSCFMAASMVGSLLFRVATSTRYHLQPGHVLCVAVLMAFFSFFMLTFSTVPGQPRPHESFLAFLLLELACGLYFPALNFLQGRIIPEEKRASVLAWFRLPLHLLACLGLLALHGEVSGTGAGETGSGTRHMFGGCAVMMLAALMAVVSLFTLGRNDTDLKLEGSRGEGEMY.

Helical transmembrane passes span 1–21 (MFVT…GLEL), 44–63 (ATFL…QGPY), 78–98 (IAIL…FSGW), 129–149 (FVLI…TTTF), 177–197 (TWNH…AEWL), 199–219 (LGPV…AWFV), 274–294 (VMLL…FIFL), 304–324 (SPLG…SLLF), 339–359 (VLCV…FSTV), 369–389 (FLAF…LNFL), 401–421 (SVLA…LLAL), and 441–461 (FGGC…LFTL).

Belongs to the major facilitator superfamily.

It localises to the cell membrane. Mediates high-affinity intracellular uptake of the rare oligo-element molybdenum. The chain is Molybdate-anion transporter (mfsd5) from Takifugu rubripes (Japanese pufferfish).